The sequence spans 198 residues: Single-stranded DNA cytosine deaminase (198 aa).

Residues 1–30 carry the Bipartite nuclear localization signal motif; it reads MDSLLMKQRKFLYHFKNVRWAKGRHETYLC. Residues 2–26 are interaction with SUPT6H; the sequence is DSLLMKQRKFLYHFKNVRWAKGRHE. A CMP/dCMP-type deaminase domain is found at 23–129; the sequence is GRHETYLCYV…KAEPEGLRRL (107 aa). Phosphothreonine; by PKA is present on Thr-27. Position 38 is a phosphoserine; by PKA (Ser-38). Residues 39 to 42 are important for interaction with CTNNBL1; it reads ATSF. His-56 serves as a coordination point for Zn(2+). The active-site Proton donor is the Glu-58. Positions 87 and 90 each coordinate Zn(2+). Positions 88 to 116 are required for interaction with RNF126; it reads YDCARHVADFLRGYPNLSLRIFAARLYFC. A Nuclear export signal motif is present at residues 183-198; sequence LYEVDDLRDAFRTLGL.

It belongs to the cytidine and deoxycytidylate deaminase family. As to quaternary structure, interacts with CTNNBL1; the interaction is important for the immunoglobulin switch activity of AICDA. Interacts (via its NLS) with KPNA1. Interacts with PKA/PRKACA and PRKAR1A/PKR1. Interacts with SUPT6H, TRIM28 and NCL. Directly interacts with MCM3AP; this interaction may favor AICDA recruitment to immunoglobulin variable region genes, hence promoting somatic hypermutations. Requires Zn(2+) as cofactor. In terms of processing, ser-38 is the major site whereas Thr-27 is the minor site of phosphorylation. Phosphorylation regulates its class-switch recombination activity. Post-translationally, probably monoubiquitinated on several residues by RNF126. As to expression, expressed in thymus, lung, spleen, kidney, small intestine, lymph node and tonsil.

It localises to the nucleus. The protein resides in the cytoplasm. It catalyses the reaction a 2'-deoxycytidine in single-stranded DNA + H2O + H(+) = a 2'-deoxyuridine in single-stranded DNA + NH4(+). Single-stranded DNA-specific cytidine deaminase. Involved in somatic hypermutation (SHM), gene conversion, and class-switch recombination (CSR) in B-lymphocytes by deaminating C to U during transcription of Ig-variable (V) and Ig-switch (S) region DNA. Required for several crucial steps of B-cell terminal differentiation necessary for efficient antibody responses. May also play a role in the epigenetic regulation of gene expression by participating in DNA demethylation. The chain is Single-stranded DNA cytosine deaminase (AICDA) from Canis lupus familiaris (Dog).